We begin with the raw amino-acid sequence, 121 residues long: Large ribosomal subunit protein bL20 (121 aa).

Belongs to the bacterial ribosomal protein bL20 family.

Its function is as follows. Binds directly to 23S ribosomal RNA and is necessary for the in vitro assembly process of the 50S ribosomal subunit. It is not involved in the protein synthesizing functions of that subunit. This Orientia tsutsugamushi (strain Boryong) (Rickettsia tsutsugamushi) protein is Large ribosomal subunit protein bL20.